A 326-amino-acid chain; its full sequence is Aquaporin-4 (326 aa).

Residues Met-1–Lys-39 are Cytoplasmic-facing. 2 S-palmitoyl cysteine lipidation sites follow: Cys-15 and Cys-20. Residues Ala-40–Ile-60 traverse the membrane as a helical segment. Residues Asn-61 to Asp-72 lie on the Extracellular side of the membrane. A helical membrane pass occupies residues Met-73–Gly-92. Residues His-93 to Gly-96 lie on the Cytoplasmic side of the membrane. The discontinuously helical intramembrane region spans Gly-97–Thr-104. Positions Asn-100–Ala-102 match the NPA 1 motif. Residues Val-105–Ser-118 are Cytoplasmic-facing. Phosphoserine; by PKG is present on Ser-114. The chain crosses the membrane as a helical span at residues Val-119–Val-139. At Thr-140 to Thr-158 the chain is on the extracellular side. Residue Asn-156 is glycosylated (N-linked (GlcNAc...) asparagine). Residues Ala-159–Ala-179 traverse the membrane as a helical segment. Residues Ser-180–Asp-187 lie on the Cytoplasmic side of the membrane. Ser-183 is subject to Phosphoserine; by PKC. The helical transmembrane segment at Val-188–Ile-208 threads the bilayer. A glycan (N-linked (GlcNAc...) asparagine) is linked at Asn-209. Residues Asn-209 to Thr-211 are Extracellular-facing. Residues Gly-212 to Val-225 constitute an intramembrane region (discontinuously helical). An NPA 2 motif is present at residues Asn-216–Ala-218. Topologically, residues Ile-226–Trp-234 are extracellular. The chain crosses the membrane as a helical span at residues Ile-235 to Phe-255. The Cytoplasmic portion of the chain corresponds to Cys-256–Val-326. 2 positions are modified to phosphoserine: Ser-279 and Ser-288. Thr-292 carries the post-translational modification Phosphothreonine. The residue at position 324 (Ser-324) is a Phosphoserine.

The protein belongs to the MIP/aquaporin (TC 1.A.8) family. As to quaternary structure, homotetramer. The tetramers can form oligomeric arrays in membranes. The size of the oligomers differs between tissues and is smaller in skeletal muscle than in brain. Interaction between AQP4 oligomeric arrays in close-by cells can contribute to cell-cell adhesion. Part of a complex containing MLC1, TRPV4, HEPACAM and ATP1B1. In terms of processing, phosphorylation by PKC at Ser-183 reduces conductance by 50%. Phosphorylation by PKG at Ser-114 in response to glutamate increases conductance by 40%. Post-translationally, isoform Long: Palmitoylated on its N-terminal region.

Its subcellular location is the cell membrane. The protein resides in the basolateral cell membrane. It localises to the endosome membrane. The protein localises to the sarcolemma. It is found in the cell projection. It carries out the reaction H2O(in) = H2O(out). Forms a water-specific channel. Plays an important role in brain water homeostasis and in glymphatic solute transport. Required for a normal rate of water exchange across the blood brain interface. Required for normal levels of cerebrospinal fluid influx into the brain cortex and parenchyma along paravascular spaces that surround penetrating arteries, and for normal drainage of interstitial fluid along paravenous drainage pathways. Thereby, it is required for normal clearance of solutes from the brain interstitial fluid, including soluble beta-amyloid peptides derived from APP. Plays a redundant role in urinary water homeostasis and urinary concentrating ability. The protein is Aquaporin-4 (AQP4) of Notomys alexis (Spinifex hopping mouse).